Here is a 232-residue protein sequence, read N- to C-terminus: BTB/POZ domain-containing protein KCTD11 (232 aa).

The BTB domain maps to 1–49; the sequence is MLGAMFRAGTPMPPNLNSQGGGHYFIDRDGKAFRHILNFLRLGRLDLPR.

In terms of assembly, homopentamer. Interacts with KCTD6 and KCTD21; KCTD11 and KCTD6 or KCTD21 may associate in pentameric assemblies. Component of the BCR(KCTD11) E3 ubiquitin ligase complex, at least composed of CUL3 and KCTD11 and RBX1. Interacts (via BTB domain) with CUL3; initially a 4:4 stoichiometry has been reported, however, electron microscopy revealed pentameric states of the BTB domain. Higher expression in cerebellum than in whole brain and lower expression in medulloblastoma.

The protein operates within protein modification; protein ubiquitination. Functionally, plays a role as a marker and a regulator of neuronal differentiation; Up-regulated by a variety of neurogenic signals, such as retinoic acid, epidermal growth factor/EGF and NGFB/nerve growth factor. Induces apoptosis, growth arrest and the expression of cyclin-dependent kinase inhibitor CDKN1B. Plays a role as a tumor repressor and inhibits cell growth and tumorigenicity of medulloblastoma (MDB). Acts as a probable substrate-specific adapter for a BCR (BTB-CUL3-RBX1) E3 ubiquitin-protein ligase complex towards HDAC1. Functions as antagonist of the Hedgehog pathway on cell proliferation and differentiation by affecting the nuclear transfer of transcription factor GLI1, thus maintaining cerebellar granule cells in undifferentiated state, this effect probably occurs via HDAC1 down-regulation, keeping GLI1 acetylated and inactive. When knock-down, Hedgehog antagonism is impaired and proliferation of granule cells is sustained. Activates the caspase cascade. This is BTB/POZ domain-containing protein KCTD11 (KCTD11) from Homo sapiens (Human).